We begin with the raw amino-acid sequence, 554 residues long: Probable efflux pump gsfJ (554 aa).

14 helical membrane passes run 54–74 (LAAV…DNTI), 93–115 (SWYG…GKFY), 120–140 (IKVW…ICAV), 152–172 (AIAG…IGFA), 181–201 (LLGF…LIGG), 206–226 (KCFY…FLLF), 248–268 (LVGA…LQYG), 279–299 (VIGL…WEIY), 321–341 (IYMF…PIYF), 349–369 (PIGS…AAIV), 379–399 (IVPL…GLFY), 410–430 (WVGY…IAMS), 447–467 (IVNF…QCAF), and 518–538 (VFAI…FGSW).

Belongs to the major facilitator superfamily.

Its subcellular location is the membrane. Functionally, probable efflux pump; part of the gene cluster that mediates the biosynthesis of griseofulvin. The protein is Probable efflux pump gsfJ of Penicillium aethiopicum.